The primary structure comprises 456 residues: Enolase (456 aa).

Gln164 provides a ligand contact to (2R)-2-phosphoglycerate. Glu207 (proton donor) is an active-site residue. Residues Asp244, Glu287, and Asp314 each coordinate Mg(2+). Lys339, Arg368, Ser369, and Lys390 together coordinate (2R)-2-phosphoglycerate. Lys339 (proton acceptor) is an active-site residue.

It belongs to the enolase family. In terms of assembly, component of the RNA degradosome, a multiprotein complex involved in RNA processing and mRNA degradation. Mg(2+) is required as a cofactor.

The protein localises to the cytoplasm. Its subcellular location is the secreted. The protein resides in the cell surface. It catalyses the reaction (2R)-2-phosphoglycerate = phosphoenolpyruvate + H2O. The protein operates within carbohydrate degradation; glycolysis; pyruvate from D-glyceraldehyde 3-phosphate: step 4/5. In terms of biological role, catalyzes the reversible conversion of 2-phosphoglycerate (2-PG) into phosphoenolpyruvate (PEP). It is essential for the degradation of carbohydrates via glycolysis. This Francisella tularensis subsp. tularensis (strain FSC 198) protein is Enolase.